The sequence spans 296 residues: Formamidopyrimidine-DNA glycosylase (296 aa).

P2 (schiff-base intermediate with DNA) is an active-site residue. The active-site Proton donor is E3. K61 (proton donor; for beta-elimination activity) is an active-site residue. DNA is bound by residues H104, R123, and K169. Residues 255–289 (DAYGREGEPCRRCGAIMRRDKFMNRSSFYCPRCQP) form an FPG-type zinc finger. The active-site Proton donor; for delta-elimination activity is R279.

It belongs to the FPG family. As to quaternary structure, monomer. Zn(2+) serves as cofactor.

It catalyses the reaction Hydrolysis of DNA containing ring-opened 7-methylguanine residues, releasing 2,6-diamino-4-hydroxy-5-(N-methyl)formamidopyrimidine.. The catalysed reaction is 2'-deoxyribonucleotide-(2'-deoxyribose 5'-phosphate)-2'-deoxyribonucleotide-DNA = a 3'-end 2'-deoxyribonucleotide-(2,3-dehydro-2,3-deoxyribose 5'-phosphate)-DNA + a 5'-end 5'-phospho-2'-deoxyribonucleoside-DNA + H(+). In terms of biological role, involved in base excision repair of DNA damaged by oxidation or by mutagenic agents. Acts as a DNA glycosylase that recognizes and removes damaged bases. Has a preference for oxidized purines, such as 7,8-dihydro-8-oxoguanine (8-oxoG). Has AP (apurinic/apyrimidinic) lyase activity and introduces nicks in the DNA strand. Cleaves the DNA backbone by beta-delta elimination to generate a single-strand break at the site of the removed base with both 3'- and 5'-phosphates. The sequence is that of Formamidopyrimidine-DNA glycosylase from Mycobacterium sp. (strain KMS).